Consider the following 490-residue polypeptide: Acetyl-coenzyme A carboxylase carboxyl transferase subunit beta, chloroplastic (490 aa).

The disordered stretch occupies residues 184-203 (LNSSENEGSSRRTRTKGSDL). The region spanning 221-490 (LWVQCENCYG…PLNQKSSKIK (270 aa)) is the CoA carboxyltransferase N-terminal domain. The Zn(2+) site is built by cysteine 225, cysteine 228, cysteine 244, and cysteine 247. The segment at 225-247 (CENCYGLNYKKFLKSKMNICEQC) adopts a C4-type zinc-finger fold.

The protein belongs to the AccD/PCCB family. In terms of assembly, acetyl-CoA carboxylase is a heterohexamer composed of biotin carboxyl carrier protein, biotin carboxylase and 2 subunits each of ACCase subunit alpha and ACCase plastid-coded subunit beta (accD). Zn(2+) is required as a cofactor.

It is found in the plastid. It localises to the chloroplast stroma. The enzyme catalyses N(6)-carboxybiotinyl-L-lysyl-[protein] + acetyl-CoA = N(6)-biotinyl-L-lysyl-[protein] + malonyl-CoA. It functions in the pathway lipid metabolism; malonyl-CoA biosynthesis; malonyl-CoA from acetyl-CoA: step 1/1. Component of the acetyl coenzyme A carboxylase (ACC) complex. Biotin carboxylase (BC) catalyzes the carboxylation of biotin on its carrier protein (BCCP) and then the CO(2) group is transferred by the transcarboxylase to acetyl-CoA to form malonyl-CoA. In Solanum bulbocastanum (Wild potato), this protein is Acetyl-coenzyme A carboxylase carboxyl transferase subunit beta, chloroplastic.